The chain runs to 130 residues: Hypocretin neuropeptide precursor (130 aa).

The first 32 residues, 1 to 32 (MNFPSTKVPWAAVTLLLLLLLPPALLSLGVDA), serve as a signal peptide directing secretion. Residue Q33 is modified to Pyrrolidone carboxylic acid. 2 disulfide bridges follow: C38/C44 and C39/C46. L65 carries the leucine amide modification. M96 carries the methionine amide modification. A propeptide spanning residues 97 to 130 (GRRAGAELEPHPCSGRGCPTVTTTALAPRGGSGV) is cleaved from the precursor.

This sequence belongs to the orexin family. Post-translationally, specific enzymatic cleavages at paired basic residues yield the different active peptides. In terms of tissue distribution, restricted to neuronal cell bodies of the dorsal and lateral hypothalamus.

The protein resides in the rough endoplasmic reticulum. It is found in the cytoplasmic vesicle. The protein localises to the synapse. Functionally, neuropeptides that play a significant role in the regulation of food intake and sleep-wakefulness, possibly by coordinating the complex behavioral and physiologic responses of these complementary homeostatic functions. A broader role in the homeostatic regulation of energy metabolism, autonomic function, hormonal balance and the regulation of body fluids, is also suggested. Binds to orexin receptors HCRTR1/OX1R and HCRTR2/OX2R with a high affinity. Stimulates food intake. Modulates pituitary luteinizing hormone secretion in an ovarian steroid-dependent manner. In terms of biological role, binds to orexin receptor HCRTR2/OX2R only. Stimulates food intake. Modulates pituitary luteinizing hormone secretion in an ovarian steroid-dependent manner. This chain is Hypocretin neuropeptide precursor (Hcrt), found in Mus musculus (Mouse).